Here is a 229-residue protein sequence, read N- to C-terminus: Cytidylate kinase (229 aa).

12-20 (GPSGAGKGT) contributes to the ATP binding site.

Belongs to the cytidylate kinase family. Type 1 subfamily.

The protein localises to the cytoplasm. It carries out the reaction CMP + ATP = CDP + ADP. The enzyme catalyses dCMP + ATP = dCDP + ADP. This Pseudomonas aeruginosa (strain LESB58) protein is Cytidylate kinase.